Reading from the N-terminus, the 388-residue chain is Mannosyl-3-phosphoglycerate synthase (388 aa).

Belongs to the glycosyltransferase 2 family.

It is found in the cytoplasm. It catalyses the reaction (2R)-3-phosphoglycerate + GDP-alpha-D-mannose = 2-O-(alpha-D-mannosyl)-3-phosphoglycerate + GDP + H(+). Its pathway is carbohydrate biosynthesis; 2-(alpha-D-mannosyl)-D-glycerate biosynthesis; 2-(alpha-D-mannosyl)-D-glycerate from GDP-alpha-D-mannose (MPG route): step 1/2. Functionally, transfers a mannosyl group from GDP-mannose to phosphoglycerate to form mannosyl-3-phosphoglycerate (MPG). This chain is Mannosyl-3-phosphoglycerate synthase (mngA), found in Aeropyrum pernix (strain ATCC 700893 / DSM 11879 / JCM 9820 / NBRC 100138 / K1).